We begin with the raw amino-acid sequence, 2326 residues long: Probable voltage-dependent N-type calcium channel subunit alpha-1B (2326 aa).

Residues 1-83 (MARLGNDVPA…DNIIRKYAKR (83 aa)) lie on the Cytoplasmic side of the membrane. Positions 17–37 (AGGGRGANRHAGPQAGQRGMY) are disordered. An I repeat occupies 75 to 351 (NIIRKYAKRI…LVLGVLSGEF (277 aa)). The chain crosses the membrane as a helical span at residues 84–107 (ITEWPPFEYMILATIIANCIVLAL). Residues 108 to 124 (EQHLPDGDKTPMSERLD) lie on the Extracellular side of the membrane. A helical transmembrane segment spans residues 125 to 145 (DTEPYFIGIFCFEAGIKIIAL). The Cytoplasmic portion of the chain corresponds to 146–156 (GFAFHKGSYLR). A helical membrane pass occupies residues 157–175 (NGWNVMDFVVVLTGILTTI). At 176–180 (GTDFD) the chain is on the extracellular side. Residues 181–204 (LRTLRAVRVLRPLKLVSGIPSLQV) traverse the membrane as a helical segment. At 205-214 (VLKSIMKAMV) the chain is on the cytoplasmic side. A helical membrane pass occupies residues 215 to 237 (PLLQIGLLLFFAILMFAIIGLEF). Residues 238-323 (YMGKFHKTCF…TANDALGNTW (86 aa)) lie on the Extracellular side of the membrane. N-linked (GlcNAc...) asparagine glycosylation occurs at asparagine 271. A helical transmembrane segment spans residues 324 to 348 (NWLYFIPLIVIGSFFMLNLVLGVLS). Residues 349 to 472 (GEFAKERERV…FFIRRMVKSQ (124 aa)) are Cytoplasmic-facing. The binding to the beta subunit stretch occupies residues 371-388 (QQVEQEFNRYLRWIHIAE). One copy of the II repeat lies at 458 to 702 (EKRFRFFIRR…VFLAIAVDNL (245 aa)). The chain crosses the membrane as a helical span at residues 473–491 (SFYWIVLCLVGLNTLCVAI). Topologically, residues 492–501 (VHYDQPPLLT) are extracellular. A helical transmembrane segment spans residues 502–524 (DALYFAEFVFLGLFLTEMSLKMY). Topologically, residues 525-534 (GLGPRNYFHS) are cytoplasmic. Serine 534 is a binding site for a 1,2-diacyl-sn-glycero-3-phospho-(1D-myo-inositol-4,5-bisphosphate). The chain crosses the membrane as a helical span at residues 535-556 (SFNCFDFGVIVGSIFEVVWTAV). At 557 to 563 (KPDTSFG) the chain is on the extracellular side. Residues 564–576 (ISVLRALRLLRIF) traverse the membrane as a helical segment. 2 residues coordinate a 1,2-diacyl-sn-glycero-3-phospho-(1D-myo-inositol-4,5-bisphosphate): arginine 574 and lysine 577. Over 577–594 (KVTKYWNSLRNLVVSLLN) the chain is Cytoplasmic. A helical transmembrane segment spans residues 595–620 (SMKSIISLLFLLFLFIVVFALLGMQL). At 621–672 (FGGQFNFEDGTPPTNFDTFPAAILTVFQILTGEDWNEVMYYGIEAHGGVKKG) the chain is on the extracellular side. A helical membrane pass occupies residues 673 to 699 (MFSSVYFIILTLFGNYTLLNVFLAIAV). Residues 700-1148 (DNLANAQELT…ACHYIVNLRY (449 aa)) lie on the Cytoplasmic side of the membrane. The segment at 793–1048 (SHQIRPDMKT…LQHLPQQPED (256 aa)) is disordered. Composition is skewed to basic and acidic residues over residues 796–808 (IRPD…DRPL), 854–879 (KLGE…DDKR), 886–908 (SKET…SHEG), 935–979 (HGTE…EGAE), and 994–1011 (SEEK…VLRE). Positions 1020–1032 (TQPSQDSGTQGNV) are enriched in polar residues. The III repeat unit spans residues 1134-1416 (NPVRRACHYI…IFVALIIITF (283 aa)). The helical transmembrane segment at 1149–1167 (FEMCILLVITMSSIALAAE) threads the bilayer. Residues 1168–1175 (DPVQGDAP) lie on the Extracellular side of the membrane. A helical membrane pass occupies residues 1176 to 1200 (RNNVLKYLDYVFTGVFTFEMVIKMI). Residues 1201–1214 (NLGLILHPGSYFRD) are Cytoplasmic-facing. A helical membrane pass occupies residues 1215-1235 (LWNILDFIVVSGALVAFAFTG). Over 1236 to 1241 (SRGKDL) the chain is Extracellular. The chain crosses the membrane as a helical span at residues 1242–1262 (NTIKSLRVLRVLRPLKTIKRL). Residues 1263 to 1280 (PKLKAVFDCVVNSLKNVL) lie on the Cytoplasmic side of the membrane. The helical transmembrane segment at 1281 to 1300 (NILIVYMLFMFIFAVIAVQL) threads the bilayer. Residues 1301–1387 (FKGKFFYCTD…DQGPSPSYRM (87 aa)) are Extracellular-facing. The helical transmembrane segment at 1388 to 1413 (EMSIFYVVYFVVFPFFFVNIFVALII) threads the bilayer. Over 1414–1468 (ITFQEQGDKVMSDCSLEKNERACIDFAISAKPLTRYMPQNKQTFQYKMWKFVVSP) the chain is Cytoplasmic. The IV repeat unit spans residues 1453–1708 (NKQTFQYKMW…LFVAVIMDNF (256 aa)). The helical transmembrane segment at 1469-1487 (PFEYLIMALIALNTIVLMM) threads the bilayer. At 1488–1495 (KFYNAPDP) the chain is on the extracellular side. Residues 1496-1520 (YDRMLQYLNILFTFLFSMECVLKLI) traverse the membrane as a helical segment. Residues 1521–1530 (GFGVLNYFRD) are Cytoplasmic-facing. A helical transmembrane segment spans residues 1531-1552 (AWNVFDFVTVLGSITDILVTEL). Topologically, residues 1553–1558 (ADSFIN) are extracellular. Asparagine 1558 carries an N-linked (GlcNAc...) asparagine glycan. The helical transmembrane segment at 1559 to 1577 (LSFLRLFRAARLIKLLRQG) threads the bilayer. Over 1578–1596 (YTIRILLWTFVQSFKALPY) the chain is Cytoplasmic. A helical transmembrane segment spans residues 1597–1616 (VCLLIAMLFFIYAIIGMQVF). Residues 1617-1680 (GNIELDDDGA…IDGDECGSNF (64 aa)) lie on the Extracellular side of the membrane. The chain crosses the membrane as a helical span at residues 1681–1704 (AYFYFVSFIFFSSFLMLNLFVAVI). Residues 1705–2326 (MDNFEYLTRD…YRETDEDDWC (622 aa)) are Cytoplasmic-facing. One can recognise an EF-hand domain in the interval 1721 to 1756 (HHLDEFIRVWAEYDPGARGRITYNDMYEMLRHMCPP). Positions 1734, 1740, and 1745 each coordinate Ca(2+). Residues 1897–1912 (EEPSSYSTSHKNSVNP) are compositionally biased toward polar residues. 4 disordered regions span residues 1897–1916 (EEPS…LYQG), 1932–1954 (CAEG…KSSS), 2039–2242 (PHHH…SSDP), and 2271–2326 (TTAT…DDWC). Over residues 1932 to 1948 (CAEGKKEVPESHPEEAG) the composition is skewed to basic and acidic residues. Positions 2039-2055 (PHHHHHHHRCHHRREKK) are enriched in basic residues. Basic and acidic residues-rich tracts occupy residues 2056 to 2069 (QRSL…HADE) and 2077 to 2104 (QLRD…EKQR). 3 stretches are compositionally biased toward polar residues: residues 2142-2161 (GSGS…STPS), 2275-2289 (GRSP…QPPQ), and 2302-2311 (GRSTGPSTAA).

This sequence belongs to the calcium channel alpha-1 subunit (TC 1.A.1.11) family. As to quaternary structure, multisubunit complex consisting of alpha-1, alpha-2, beta and delta subunits in a 1:1:1:1 ratio. The channel activity is directed by the pore-forming and voltage-sensitive alpha-1 subunit. In many cases, this subunit is sufficient to generate voltage-sensitive calcium channel activity. The auxiliary subunits beta and alpha-2/delta linked by a disulfide bridge regulate the channel activity. Phosphorylated in vitro by CaM-kinase II, PKA, PKC and CGPK. In terms of tissue distribution, expression is higher in the electric lobe than in the forebrain.

Its subcellular location is the membrane. Its function is as follows. The isoform alpha-1B gives rise to N-type calcium currents. N-type calcium channels belong to the 'high-voltage activated' (HVA) group. This is Probable voltage-dependent N-type calcium channel subunit alpha-1B from Diplobatis ommata (Ocellated electric ray).